Here is a 115-residue protein sequence, read N- to C-terminus: MGTSLLCWVVLGFLGTDHTGAGVSQSPRYKVTKRGQDVTLRCDPISSHATLYWYQQALGQGPEFLTYFNYEAQPDKSGLPSDRFSAERPEGSISTLTIQRTEQRDSAMYRCASSL.

Residues 1-21 (MGTSLLCWVVLGFLGTDHTGA) form the signal peptide. The Ig-like domain maps to 22–115 (GVSQSPRYKV…SAMYRCASSL (94 aa)). A disulfide bridge links Cys-42 with Cys-111.

As to quaternary structure, alpha-beta TR is a heterodimer composed of an alpha and beta chain; disulfide-linked. The alpha-beta TR is associated with the transmembrane signaling CD3 coreceptor proteins to form the TR-CD3 (TcR or TCR). The assembly of alpha-beta TR heterodimers with CD3 occurs in the endoplasmic reticulum where a single alpha-beta TR heterodimer associates with one CD3D-CD3E heterodimer, one CD3G-CD3E heterodimer and one CD247 homodimer forming a stable octameric structure. CD3D-CD3E and CD3G-CD3E heterodimers preferentially associate with TR alpha and TR beta chains, respectively. The association of the CD247 homodimer is the last step of TcR assembly in the endoplasmic reticulum and is required for transport to the cell surface.

The protein resides in the cell membrane. Functionally, v region of the variable domain of T cell receptor (TR) beta chain that participates in the antigen recognition. Alpha-beta T cell receptors are antigen specific receptors which are essential to the immune response and are present on the cell surface of T lymphocytes. Recognize peptide-major histocompatibility (MH) (pMH) complexes that are displayed by antigen presenting cells (APC), a prerequisite for efficient T cell adaptive immunity against pathogens. Binding of alpha-beta TR to pMH complex initiates TR-CD3 clustering on the cell surface and intracellular activation of LCK that phosphorylates the ITAM motifs of CD3G, CD3D, CD3E and CD247 enabling the recruitment of ZAP70. In turn ZAP70 phosphorylates LAT, which recruits numerous signaling molecules to form the LAT signalosome. The LAT signalosome propagates signal branching to three major signaling pathways, the calcium, the mitogen-activated protein kinase (MAPK) kinase and the nuclear factor NF-kappa-B (NF-kB) pathways, leading to the mobilization of transcription factors that are critical for gene expression and essential for T cell growth and differentiation. The T cell repertoire is generated in the thymus, by V-(D)-J rearrangement. This repertoire is then shaped by intrathymic selection events to generate a peripheral T cell pool of self-MH restricted, non-autoaggressive T cells. Post-thymic interaction of alpha-beta TR with the pMH complexes shapes TR structural and functional avidity. The polypeptide is T cell receptor beta variable 7-7 (Homo sapiens (Human)).